A 152-amino-acid chain; its full sequence is Large ribosomal subunit protein bL34c (152 aa).

Residues 1–91 constitute a chloroplast transit peptide; that stretch reads MATLSLLSTG…DRCRRFVVRA (91 aa).

Component of the chloroplast large ribosomal subunit (LSU). Mature 70S chloroplast ribosomes of higher plants consist of a small (30S) and a large (50S) subunit. The 30S small subunit contains 1 molecule of ribosomal RNA (16S rRNA) and 24 different proteins. The 50S large subunit contains 3 rRNA molecules (23S, 5S and 4.5S rRNA) and 33 different proteins.

The protein resides in the plastid. Its subcellular location is the chloroplast. Its function is as follows. Component of the chloroplast ribosome (chloro-ribosome), a dedicated translation machinery responsible for the synthesis of chloroplast genome-encoded proteins, including proteins of the transcription and translation machinery and components of the photosynthetic apparatus. The chain is Large ribosomal subunit protein bL34c (RPL34) from Spinacia oleracea (Spinach).